A 152-amino-acid polypeptide reads, in one-letter code: MGIFTKKNNVIAYTDGACKGNPGIGGWGAILSYNGVDKEISGAEKDTTNNRMELMAAIKTLQALKRKCDITIYTDSKYLQNGINQWLANWKANGWKTAAKKEVKNKDLWQELDSLTTKHNVTWSWVKGHSGNQGNEKADELANKAIAELTGK.

Positions 6–147 (KKNNVIAYTD…ADELANKAIA (142 aa)) constitute an RNase H type-1 domain. Mg(2+)-binding residues include D15, E53, D75, and D139.

This sequence belongs to the RNase H family. Monomer. Mg(2+) serves as cofactor.

The protein resides in the cytoplasm. The enzyme catalyses Endonucleolytic cleavage to 5'-phosphomonoester.. In terms of biological role, endonuclease that specifically degrades the RNA of RNA-DNA hybrids. This is Ribonuclease H from Francisella philomiragia subsp. philomiragia (strain ATCC 25017 / CCUG 19701 / FSC 153 / O#319-036).